Here is a 475-residue protein sequence, read N- to C-terminus: Ribulose bisphosphate carboxylase large chain (475 aa).

Positions 1-2 (MS) are excised as a propeptide. Pro-3 carries the post-translational modification N-acetylproline. An N6,N6,N6-trimethyllysine modification is found at Lys-14. Residues Asn-123 and Thr-173 each contribute to the substrate site. The active-site Proton acceptor is Lys-175. Lys-177 contributes to the substrate binding site. Positions 201, 203, and 204 each coordinate Mg(2+). Residue Lys-201 is modified to N6-carboxylysine. Catalysis depends on His-294, which acts as the Proton acceptor. Substrate is bound by residues Arg-295, His-327, and Ser-379.

Belongs to the RuBisCO large chain family. Type I subfamily. Heterohexadecamer of 8 large chains and 8 small chains; disulfide-linked. The disulfide link is formed within the large subunit homodimers. Mg(2+) serves as cofactor. In terms of processing, the disulfide bond which can form in the large chain dimeric partners within the hexadecamer appears to be associated with oxidative stress and protein turnover.

Its subcellular location is the plastid. The protein localises to the chloroplast. The enzyme catalyses 2 (2R)-3-phosphoglycerate + 2 H(+) = D-ribulose 1,5-bisphosphate + CO2 + H2O. It carries out the reaction D-ribulose 1,5-bisphosphate + O2 = 2-phosphoglycolate + (2R)-3-phosphoglycerate + 2 H(+). RuBisCO catalyzes two reactions: the carboxylation of D-ribulose 1,5-bisphosphate, the primary event in carbon dioxide fixation, as well as the oxidative fragmentation of the pentose substrate in the photorespiration process. Both reactions occur simultaneously and in competition at the same active site. In Chlorokybus atmophyticus (Soil alga), this protein is Ribulose bisphosphate carboxylase large chain.